The sequence spans 206 residues: Small ribosomal subunit protein uS4 (206 aa).

Positions 93-156 (CRLDNLVYRL…RKIKIIAEAL (64 aa)) constitute an S4 RNA-binding domain.

The protein belongs to the universal ribosomal protein uS4 family. As to quaternary structure, part of the 30S ribosomal subunit. Contacts protein S5. The interaction surface between S4 and S5 is involved in control of translational fidelity.

Its function is as follows. One of the primary rRNA binding proteins, it binds directly to 16S rRNA where it nucleates assembly of the body of the 30S subunit. In terms of biological role, with S5 and S12 plays an important role in translational accuracy. The polypeptide is Small ribosomal subunit protein uS4 (Protochlamydia amoebophila (strain UWE25)).